Consider the following 43-residue polypeptide: METGILIVIFISCLLVSFTGYAVYTAFGQPSKKLRDPFEEHED.

A helical membrane pass occupies residues glycine 4–tyrosine 24.

The protein belongs to the PsbN family.

The protein localises to the plastid. It is found in the chloroplast thylakoid membrane. Its function is as follows. May play a role in photosystem I and II biogenesis. The polypeptide is Protein PsbN (Coleochaete orbicularis (Charophycean green alga)).